A 424-amino-acid polypeptide reads, in one-letter code: GTPase Obg (424 aa).

Residues 1–160 (MFDRVEIRIK…YELILELKLI (160 aa)) enclose the Obg domain. One can recognise an OBG-type G domain in the interval 161 to 328 (ADVAIIGYPN…LLDKVAEKLA (168 aa)). GTP is bound by residues 167-174 (GYPNVGKS), 192-196 (FTTLS), 213-216 (EVPG), 280-283 (NKID), and 309-311 (SAL). Serine 174 and threonine 194 together coordinate Mg(2+). The 76-residue stretch at 349 to 424 (PAPKGKMGFH…IITGRLEWYL (76 aa)) folds into the OCT domain.

It belongs to the TRAFAC class OBG-HflX-like GTPase superfamily. OBG GTPase family. As to quaternary structure, monomer. Mg(2+) is required as a cofactor.

Its subcellular location is the cytoplasm. In terms of biological role, an essential GTPase which binds GTP, GDP and possibly (p)ppGpp with moderate affinity, with high nucleotide exchange rates and a fairly low GTP hydrolysis rate. Plays a role in control of the cell cycle, stress response, ribosome biogenesis and in those bacteria that undergo differentiation, in morphogenesis control. The sequence is that of GTPase Obg from Dehalococcoides mccartyi (strain ATCC BAA-2266 / KCTC 15142 / 195) (Dehalococcoides ethenogenes (strain 195)).